A 301-amino-acid polypeptide reads, in one-letter code: Protein ARMCX6 (301 aa).

Positions 1 to 6 (MGRARE) are mitochondrion outer membrane (MOM)-targeting sequence. The Mitochondrial intermembrane portion of the chain corresponds to 1 to 7 (MGRAREM). Residues 8-25 (GWMAAGLMIGAGACYCMY) form a helical; Signal-anchor membrane-spanning segment. Residues 26 to 36 (KLTMGRDEGNE) are mitochondrion outer membrane (MOM)-targeting sequence. Topologically, residues 26–301 (KLTMGRDEGN…REMLVEAISP (276 aa)) are cytoplasmic. Residues 70–105 (SEDGEWDEPGAPGGTEDRRSGGGKANRAHPTKQRPF) are disordered.

This sequence belongs to the eutherian X-chromosome-specific Armcx family.

It is found in the mitochondrion. The protein resides in the mitochondrion outer membrane. Its function is as follows. May regulate the dynamics and distribution of mitochondria in neural cells. In Rattus norvegicus (Rat), this protein is Protein ARMCX6 (Armcx6).